The sequence spans 386 residues: DNase toxin Tse7 (386 aa).

As to quaternary structure, interacts with Tsi7.

It catalyses the reaction Endonucleolytic cleavage to 5'-phosphodinucleotide and 5'-phosphooligonucleotide end-products.. Functionally, type VI secretion exported toxin that via to its DNase activity induces growth arrest and ultimately DNA degradation within target cell. The activity is initially neutralized by a cognate immunity protein Tsi7. The polypeptide is DNase toxin Tse7 (Pseudomonas aeruginosa (strain ATCC 15692 / DSM 22644 / CIP 104116 / JCM 14847 / LMG 12228 / 1C / PRS 101 / PAO1)).